We begin with the raw amino-acid sequence, 372 residues long: NAD(P)H-quinone oxidoreductase subunit 1 (372 aa).

The next 8 helical transmembrane spans lie at isoleucine 27 to valine 47, isoleucine 97 to valine 117, valine 128 to methionine 148, leucine 176 to valine 196, isoleucine 204 to leucine 224, isoleucine 266 to valine 286, serine 308 to leucine 328, and phenylalanine 347 to proline 367.

The protein belongs to the complex I subunit 1 family. In terms of assembly, NDH-1 is composed of at least 11 different subunits.

Its subcellular location is the cellular thylakoid membrane. The catalysed reaction is a plastoquinone + NADH + (n+1) H(+)(in) = a plastoquinol + NAD(+) + n H(+)(out). It carries out the reaction a plastoquinone + NADPH + (n+1) H(+)(in) = a plastoquinol + NADP(+) + n H(+)(out). Its function is as follows. NDH-1 shuttles electrons from an unknown electron donor, via FMN and iron-sulfur (Fe-S) centers, to quinones in the respiratory and/or the photosynthetic chain. The immediate electron acceptor for the enzyme in this species is believed to be plastoquinone. Couples the redox reaction to proton translocation, and thus conserves the redox energy in a proton gradient. This chain is NAD(P)H-quinone oxidoreductase subunit 1, found in Prochlorococcus marinus (strain MIT 9215).